Consider the following 268-residue polypeptide: Stomatin homolog PYRAB06580 (268 aa).

Residues 1 to 21 traverse the membrane as a helical segment; sequence MILPTNFFVTTIILLFILIFL. Coiled coils occupy residues 125-152 and 178-213; these read GQAH…EATD and KQAE…ISEH.

Belongs to the band 7/mec-2 family. Homotrimer.

Its subcellular location is the membrane. The polypeptide is Stomatin homolog PYRAB06580 (Pyrococcus abyssi (strain GE5 / Orsay)).